A 449-amino-acid chain; its full sequence is Probable protoheme IX farnesyltransferase, mitochondrial (449 aa).

A compositionally biased stretch (low complexity) spans 99-138; it reads TTSTTTTTNINENNIKNENNNENNNENSNNNNEQSIKSNQ. The segment at 99-140 is disordered; it reads TTSTTTTTNINENNIKNENNNENNNENSNNNNEQSIKSNQTK. A run of 7 helical transmembrane segments spans residues 163-183, 245-267, 279-299, 303-323, 352-372, 374-394, and 402-422; these read LTAI…WVVL, MAVT…LYCW, TWIG…AATG, AIGM…FLAL, SLAH…FFNF, VHPI…LPFI, and LYII…LLRQ.

This sequence belongs to the UbiA prenyltransferase family.

It is found in the mitochondrion membrane. Functionally, converts protoheme IX and farnesyl diphosphate to heme O. The protein is Probable protoheme IX farnesyltransferase, mitochondrial (cox10) of Dictyostelium discoideum (Social amoeba).